We begin with the raw amino-acid sequence, 385 residues long: Chaperone protein DnaJ (385 aa).

In terms of domain architecture, J spans 5–70 (DYYEVLGVAK…QKRAAYDRYG (66 aa)). The CR-type zinc finger occupies 145-223 (GFDTEIRVPS…CDGVGRTRRN (79 aa)). Residues Cys158, Cys161, Cys175, Cys178, Cys197, Cys200, Cys211, and Cys214 each coordinate Zn(2+). CXXCXGXG motif repeat units follow at residues 158–165 (CDTCHGSG), 175–182 (CRTCGGSG), 197–204 (CPTCHGTG), and 211–218 (CPSCDGVG).

The protein belongs to the DnaJ family. As to quaternary structure, homodimer. Requires Zn(2+) as cofactor.

It is found in the cytoplasm. In terms of biological role, participates actively in the response to hyperosmotic and heat shock by preventing the aggregation of stress-denatured proteins and by disaggregating proteins, also in an autonomous, DnaK-independent fashion. Unfolded proteins bind initially to DnaJ; upon interaction with the DnaJ-bound protein, DnaK hydrolyzes its bound ATP, resulting in the formation of a stable complex. GrpE releases ADP from DnaK; ATP binding to DnaK triggers the release of the substrate protein, thus completing the reaction cycle. Several rounds of ATP-dependent interactions between DnaJ, DnaK and GrpE are required for fully efficient folding. Also involved, together with DnaK and GrpE, in the DNA replication of plasmids through activation of initiation proteins. This Bordetella pertussis (strain Tohama I / ATCC BAA-589 / NCTC 13251) protein is Chaperone protein DnaJ.